The chain runs to 217 residues: Deoxyribose-phosphate aldolase 1 (217 aa).

Catalysis depends on D89, which acts as the Proton donor/acceptor. The Schiff-base intermediate with acetaldehyde role is filled by K151. K180 functions as the Proton donor/acceptor in the catalytic mechanism.

This sequence belongs to the DeoC/FbaB aldolase family. DeoC type 1 subfamily.

The protein resides in the cytoplasm. It carries out the reaction 2-deoxy-D-ribose 5-phosphate = D-glyceraldehyde 3-phosphate + acetaldehyde. It functions in the pathway carbohydrate degradation; 2-deoxy-D-ribose 1-phosphate degradation; D-glyceraldehyde 3-phosphate and acetaldehyde from 2-deoxy-alpha-D-ribose 1-phosphate: step 2/2. Catalyzes a reversible aldol reaction between acetaldehyde and D-glyceraldehyde 3-phosphate to generate 2-deoxy-D-ribose 5-phosphate. This chain is Deoxyribose-phosphate aldolase 1, found in Cutibacterium acnes (strain DSM 16379 / KPA171202) (Propionibacterium acnes).